The sequence spans 631 residues: ESX-3 secretion system protein EccA3 (631 aa).

Gly385 to Thr392 is a binding site for ATP.

Belongs to the CbxX/CfxQ family. As to quaternary structure, part of the ESX-3 / type VII secretion system (T7SS), which is composed of cytosolic and membrane components.

It localises to the cytoplasm. Its function is as follows. Part of the ESX-3 specialized secretion system, which is important for iron and zinc uptake or homeostasis. EccA3 exhibits ATPase activity and may provide energy for the export of ESX-3 substrates. This Mycobacterium tuberculosis (strain CDC 1551 / Oshkosh) protein is ESX-3 secretion system protein EccA3.